The chain runs to 714 residues: Fatty acid oxidation complex subunit alpha (714 aa).

The tract at residues 1–190 is enoyl-CoA hydratase; it reads MEMASAFTLN…KLGLVDDVVP (190 aa). Residues 306–714 are 3-hydroxyacyl-CoA dehydrogenase; the sequence is APLNSVGILG…FWKTTATDLQ (409 aa).

In the N-terminal section; belongs to the enoyl-CoA hydratase/isomerase family. This sequence in the central section; belongs to the 3-hydroxyacyl-CoA dehydrogenase family. Heterotetramer of two alpha chains (FadJ) and two beta chains (FadI).

It localises to the cytoplasm. It catalyses the reaction a (3S)-3-hydroxyacyl-CoA = a (2E)-enoyl-CoA + H2O. The catalysed reaction is a 4-saturated-(3S)-3-hydroxyacyl-CoA = a (3E)-enoyl-CoA + H2O. It carries out the reaction a (3S)-3-hydroxyacyl-CoA + NAD(+) = a 3-oxoacyl-CoA + NADH + H(+). The enzyme catalyses (3S)-3-hydroxybutanoyl-CoA = (3R)-3-hydroxybutanoyl-CoA. The protein operates within lipid metabolism; fatty acid beta-oxidation. Functionally, catalyzes the formation of a hydroxyacyl-CoA by addition of water on enoyl-CoA. Also exhibits 3-hydroxyacyl-CoA epimerase and 3-hydroxyacyl-CoA dehydrogenase activities. The sequence is that of Fatty acid oxidation complex subunit alpha from Escherichia coli (strain SMS-3-5 / SECEC).